We begin with the raw amino-acid sequence, 223 residues long: Neurotrophic factor BDNF precursor form (223 aa).

The first 5 residues, S1–A5, serve as a signal peptide directing secretion. Residues A6–R114 constitute a propeptide that is removed on maturation. N-linked (GlcNAc...) asparagine glycosylation is present at N107. Cystine bridges form between C127–C194 and C172–C223.

It belongs to the NGF-beta family.

It localises to the secreted. In terms of biological role, promotes the survival of neuronal populations that are all located either in the central nervous system or directly connected to it. The polypeptide is Neurotrophic factor BDNF precursor form (BDNF) (Exiliboa placata (Oaxacan dwarf boa)).